A 99-amino-acid chain; its full sequence is Small ribosomal subunit protein bS6 (99 aa).

This sequence belongs to the bacterial ribosomal protein bS6 family.

Binds together with bS18 to 16S ribosomal RNA. In Lactiplantibacillus plantarum (strain ATCC BAA-793 / NCIMB 8826 / WCFS1) (Lactobacillus plantarum), this protein is Small ribosomal subunit protein bS6.